Reading from the N-terminus, the 209-residue chain is Translation initiation factor IF-3 (209 aa).

It belongs to the IF-3 family. In terms of assembly, monomer.

Its subcellular location is the cytoplasm. Its function is as follows. IF-3 binds to the 30S ribosomal subunit and shifts the equilibrium between 70S ribosomes and their 50S and 30S subunits in favor of the free subunits, thus enhancing the availability of 30S subunits on which protein synthesis initiation begins. In Chlorobium phaeobacteroides (strain DSM 266 / SMG 266 / 2430), this protein is Translation initiation factor IF-3.